The following is a 206-amino-acid chain: Ribosomal RNA small subunit methyltransferase G (206 aa).

S-adenosyl-L-methionine is bound by residues G74, L79, 125–126 (VE), and R140.

It belongs to the methyltransferase superfamily. RNA methyltransferase RsmG family.

The protein resides in the cytoplasm. It catalyses the reaction guanosine(527) in 16S rRNA + S-adenosyl-L-methionine = N(7)-methylguanosine(527) in 16S rRNA + S-adenosyl-L-homocysteine. In terms of biological role, specifically methylates the N7 position of guanine in position 527 of 16S rRNA. The protein is Ribosomal RNA small subunit methyltransferase G of Shewanella woodyi (strain ATCC 51908 / MS32).